Reading from the N-terminus, the 144-residue chain is Large ribosomal subunit protein uL15 (144 aa).

A disordered region spans residues 1-54 (MRLNTLSPAEGSKKAGKRLGRGIGSGLGKTGGRGHKGQKSRSGGGVRRGFEGGQ). Over residues 21-31 (RGIGSGLGKTG) the composition is skewed to gly residues.

This sequence belongs to the universal ribosomal protein uL15 family. As to quaternary structure, part of the 50S ribosomal subunit.

In terms of biological role, binds to the 23S rRNA. The sequence is that of Large ribosomal subunit protein uL15 from Escherichia coli (strain K12 / MC4100 / BW2952).